The sequence spans 122 residues: Small ribosomal subunit protein uS13 (122 aa).

A disordered region spans residues 92–122; it reads HRKQLPVRGQRTHTNARTRKGKAKPIAGKKK.

This sequence belongs to the universal ribosomal protein uS13 family. In terms of assembly, part of the 30S ribosomal subunit. Forms a loose heterodimer with protein S19. Forms two bridges to the 50S subunit in the 70S ribosome.

In terms of biological role, located at the top of the head of the 30S subunit, it contacts several helices of the 16S rRNA. In the 70S ribosome it contacts the 23S rRNA (bridge B1a) and protein L5 of the 50S subunit (bridge B1b), connecting the 2 subunits; these bridges are implicated in subunit movement. Contacts the tRNAs in the A and P-sites. The polypeptide is Small ribosomal subunit protein uS13 (Methylobacterium radiotolerans (strain ATCC 27329 / DSM 1819 / JCM 2831 / NBRC 15690 / NCIMB 10815 / 0-1)).